We begin with the raw amino-acid sequence, 71 residues long: uncharacterized protein (71 aa).

Residues 37–57 (IGVGVSDGVSAGVGVGVAMII) traverse the membrane as a helical segment.

Its subcellular location is the membrane. This is an uncharacterized protein from Dictyostelium discoideum (Social amoeba).